Consider the following 254-residue polypeptide: Transcription factor CAULIFLOWER (254 aa).

The 61-residue stretch at 1 to 61 (MGRGRVEMKR…GKLFEYSSES (61 aa)) folds into the MADS-box domain. A K-box domain is found at 90 to 180 (QTNWSMEYSR…TKQIKERESI (91 aa)). Over residues 182–191 (RTHQNQSEQQ) the composition is skewed to polar residues. A disordered region spans residues 182-205 (RTHQNQSEQQNRSHHVAPQPQPQL).

As to quaternary structure, homodimer capable of binding to CArG-box sequences.

Its subcellular location is the nucleus. Probable transcription factor that promotes early floral meristem identity in synergy with APETALA1, FRUITFULL and LEAFY. Is required subsequently for the transition of an inflorescence meristem into a floral meristem. Seems to be partially redundant to the function of APETALA1. The sequence is that of Transcription factor CAULIFLOWER (CAL) from Brassica rapa subsp. pekinensis (Chinese cabbage).